A 122-amino-acid chain; its full sequence is Small ribosomal subunit protein uS13 (122 aa).

The tract at residues 99–122 (RGQRTHTNARTRKGPAKAIAGKKK) is disordered.

Belongs to the universal ribosomal protein uS13 family. In terms of assembly, part of the 30S ribosomal subunit. Forms a loose heterodimer with protein S19. Forms two bridges to the 50S subunit in the 70S ribosome.

Its function is as follows. Located at the top of the head of the 30S subunit, it contacts several helices of the 16S rRNA. In the 70S ribosome it contacts the 23S rRNA (bridge B1a) and protein L5 of the 50S subunit (bridge B1b), connecting the 2 subunits; these bridges are implicated in subunit movement. Contacts the tRNAs in the A and P-sites. In Sinorhizobium fredii (strain NBRC 101917 / NGR234), this protein is Small ribosomal subunit protein uS13.